A 368-amino-acid polypeptide reads, in one-letter code: Phosphoserine aminotransferase (368 aa).

Residue Arg-44 participates in L-glutamate binding. Pyridoxal 5'-phosphate-binding positions include 78-79, Trp-104, Thr-157, Asp-179, and Gln-202; that span reads AT. Position 203 is an N6-(pyridoxal phosphate)lysine (Lys-203). Residue 244 to 245 coordinates pyridoxal 5'-phosphate; that stretch reads NT.

The protein belongs to the class-V pyridoxal-phosphate-dependent aminotransferase family. SerC subfamily. In terms of assembly, homodimer. The cofactor is pyridoxal 5'-phosphate.

The protein localises to the cytoplasm. The enzyme catalyses O-phospho-L-serine + 2-oxoglutarate = 3-phosphooxypyruvate + L-glutamate. The catalysed reaction is 4-(phosphooxy)-L-threonine + 2-oxoglutarate = (R)-3-hydroxy-2-oxo-4-phosphooxybutanoate + L-glutamate. Its pathway is amino-acid biosynthesis; L-serine biosynthesis; L-serine from 3-phospho-D-glycerate: step 2/3. It functions in the pathway cofactor biosynthesis; pyridoxine 5'-phosphate biosynthesis; pyridoxine 5'-phosphate from D-erythrose 4-phosphate: step 3/5. Its function is as follows. Catalyzes the reversible conversion of 3-phosphohydroxypyruvate to phosphoserine and of 3-hydroxy-2-oxo-4-phosphonooxybutanoate to phosphohydroxythreonine. The sequence is that of Phosphoserine aminotransferase from Neisseria gonorrhoeae (strain ATCC 700825 / FA 1090).